We begin with the raw amino-acid sequence, 389 residues long: Ribonucleoside-diphosphate reductase subunit M2 (389 aa).

At serine 20 the chain carries Phosphoserine. At threonine 33 the chain carries Phosphothreonine. A Cy motif is present at residues 49–51 (RRI). Fe cation is bound by residues aspartate 138, glutamate 169, and histidine 172. The active site involves tyrosine 176. Fe cation contacts are provided by glutamate 232, glutamate 266, and histidine 269.

It belongs to the ribonucleoside diphosphate reductase small chain family. In terms of assembly, heterodimer of a large and a small subunit. Interacts (via Cy motif and when phosphorylated at Thr-33) with CCNF; the interaction occurs exclusively in G2 and early M. Fe cation is required as a cofactor. Phosphorylation on Ser-20 relieves the inhibitory effect on Wnt signaling. Phosphorylated on Thr-33 by CDK1 and CDK2; predominantly in G2 and M phase. Post-translationally, ubiquitinated by the SCF(CCNF) E3 ubiquitin-protein ligase complex; leading to its degradation by the proteasome.

It localises to the cytoplasm. It is found in the nucleus. The enzyme catalyses a 2'-deoxyribonucleoside 5'-diphosphate + [thioredoxin]-disulfide + H2O = a ribonucleoside 5'-diphosphate + [thioredoxin]-dithiol. Provides the precursors necessary for DNA synthesis. Catalyzes the biosynthesis of deoxyribonucleotides from the corresponding ribonucleotides. Inhibits Wnt signaling. The chain is Ribonucleoside-diphosphate reductase subunit M2 (RRM2) from Homo sapiens (Human).